Consider the following 118-residue polypeptide: Large ribosomal subunit protein bL20 (118 aa).

This sequence belongs to the bacterial ribosomal protein bL20 family.

Functionally, binds directly to 23S ribosomal RNA and is necessary for the in vitro assembly process of the 50S ribosomal subunit. It is not involved in the protein synthesizing functions of that subunit. This is Large ribosomal subunit protein bL20 from Psychromonas ingrahamii (strain DSM 17664 / CCUG 51855 / 37).